Reading from the N-terminus, the 157-residue chain is S-ribosylhomocysteine lyase (157 aa).

Fe cation is bound by residues His-53, His-57, and Cys-124.

This sequence belongs to the LuxS family. As to quaternary structure, homodimer. It depends on Fe cation as a cofactor.

It catalyses the reaction S-(5-deoxy-D-ribos-5-yl)-L-homocysteine = (S)-4,5-dihydroxypentane-2,3-dione + L-homocysteine. Its function is as follows. Involved in the synthesis of autoinducer 2 (AI-2) which is secreted by bacteria and is used to communicate both the cell density and the metabolic potential of the environment. The regulation of gene expression in response to changes in cell density is called quorum sensing. Catalyzes the transformation of S-ribosylhomocysteine (RHC) to homocysteine (HC) and 4,5-dihydroxy-2,3-pentadione (DPD). The sequence is that of S-ribosylhomocysteine lyase from Borrelia garinii subsp. bavariensis (strain ATCC BAA-2496 / DSM 23469 / PBi) (Borreliella bavariensis).